An 83-amino-acid polypeptide reads, in one-letter code: Kappa-theraphotoxin-Cg2a (83 aa).

Positions 1-21 are cleaved as a signal peptide; the sequence is MKGSAFAIILGLVVLCACSFA. Residues 22–53 constitute a propeptide that is removed on maturation; the sequence is EDEQDQFASPNELLRSMFLESRHELIPEVEGR. 3 disulfides stabilise this stretch: cysteine 55–cysteine 69, cysteine 62–cysteine 74, and cysteine 68–cysteine 78. A Leucine amide modification is found at leucine 82.

Belongs to the neurotoxin 30 (phrixotoxin) family. As to expression, expressed by the venom gland.

The protein resides in the secreted. Functionally, inhibits voltage-gated potassium channels of the subtype Kv4.1/KCND1 with high affinity and shows weak effects on Kv4.2/KCND2 and Kv2.1/KCNB1 subtypes. The toxin modifies the gating behavior of the channel and may interact with the S3-S4 extracellular loop. The sequence is that of Kappa-theraphotoxin-Cg2a from Chilobrachys guangxiensis (Chinese earth tiger tarantula).